The chain runs to 339 residues: MTTTPDLRVGVGGAGQMGADHIQRITRVISGATVSAIVEPDAGRAAAAAAAPGSRAFASLDDALDASALEAVVIATPGQFHELVLVPALAAGLPVLCEKPLTPDSAEALRVLELEQTLDRPHIQLGFMRRFDDEYRALRELVVSGDAGELLFLRGVHRNPSVPESYTQSMLITDSVVHEFDVMPWLAGSPVASVEVKYPRRNDRAPERLREPILVLIELRNGVLVDVEMNVSVRFGYQVATEAVFQTGTARIGQPAGLQRWSDARFSIAEHTSFTTRFARAYDAQVQAWVDAVRDGSLVAGPNAWDGYLVALACEAGVRALSEPGPIAFAPAERPAFYA.

This sequence belongs to the Gfo/Idh/MocA family. Homotetramer.

It carries out the reaction myo-inositol + NAD(+) = scyllo-inosose + NADH + H(+). In terms of biological role, involved in the oxidation of myo-inositol (MI) to 2-keto-myo-inositol (2KMI or 2-inosose). The polypeptide is Inositol 2-dehydrogenase (Leifsonia xyli subsp. xyli (strain CTCB07)).